The chain runs to 631 residues: Mitochondrial Rho GTPase (631 aa).

Residues 1–605 are Cytoplasmic-facing; it reads MRAGRVRPLR…TQADLKSSTF (605 aa). Residues 15-181 form the Miro 1 domain; the sequence is KKDVRILLVG…FYYAQKAVLH (167 aa). GTP is bound by residues R27, G29, K30, T31, and S32. T31 contributes to the Mg(2+) binding site. D70 provides a ligand contact to Mg(2+). S72 provides a ligand contact to GTP. Residue K105 is modified to N6-acetyllysine. GTP is bound by residues N131, K132, D134, A162, and K163. K166 is covalently cross-linked (Glycyl lysine isopeptide (Lys-Gly) (interchain with G-Cter in ubiquitin)). Residues 197–232 form the EF-hand 1 domain; that stretch reads ACIKALTRIFKISDQDNDGTLNDAELNFFQRICFNT. D210, D212, D214, T216, and E221 together coordinate Ca(2+). K248 is covalently cross-linked (Glycyl lysine isopeptide (Lys-Gly) (interchain with G-Cter in ubiquitin)). Residues 317–352 enclose the EF-hand 2 domain; that stretch reads HAYLFLQSTFDKHDLDRDCALSPDELKDLFQVFPYI. Ca(2+) contacts are provided by D330, D332, D334, A336, and E341. Residues 429–592 form the Miro 2 domain; sequence RNVFRCNVIG…FVKLTTMAMY (164 aa). 11 residues coordinate GTP: G441, C442, G443, K444, T445, G446, K460, K541, D543, T571, and C572. G441 is a binding site for Mg(2+). A Glycyl lysine isopeptide (Lys-Gly) (interchain with G-Cter in ubiquitin) cross-link involves residue K585. The chain crosses the membrane as a helical; Anchor for type IV membrane protein span at residues 606 to 628; that stretch reads WLRASFGATVFAVVGFAMYRALL. Over 629–631 the chain is Mitochondrial intermembrane; that stretch reads KQR.

It belongs to the mitochondrial Rho GTPase family. Homodimer. Interacts with the kinesin-binding proteins TRAK1/OIP106 and TRAK2/GRIF1, forming a link between mitochondria and the trafficking apparatus of the microtubules. Interacts with RAP1GDS1. Interacts with ARMCX1. Found in a complex with KIF5B, OGT, RHOT2 and TRAK1. Post-translationally, ubiquitinated by PRKN during mitophagy, leading to its degradation and enhancement of mitophagy. Deubiquitinated by USP30. In terms of processing, acetylation on Lys-105 decreases sensitivity of mitochondrial transport to elevated Ca(2+) levels, increases mitochondrial transport and promotes axon growth. Deacetylated by HDAC6 which blocks mitochondrial transport and mediates axon growth inhibition.

It localises to the mitochondrion outer membrane. It catalyses the reaction GTP + H2O = GDP + phosphate + H(+). The enzyme catalyses ATP + H2O = ADP + phosphate + H(+). It carries out the reaction UTP + H2O = UDP + phosphate + H(+). Atypical mitochondrial nucleoside-triphosphatase (NTPase) involved in mitochondrial trafficking. Probably involved in control of anterograde transport of mitochondria and their subcellular distribution. Promotes mitochondrial fission during high calcium conditions. Can hydrolyze GTP, ATP and UTP. This Rattus norvegicus (Rat) protein is Mitochondrial Rho GTPase.